The primary structure comprises 417 residues: Putative F-box protein At3g58950 (417 aa).

The region spanning 1–53 (MDLFSSLPDEVLCHILSFLTTKEAALASVVSKRWRNQFALVPNLDIDEEGKRE) is the F-box domain.

The polypeptide is Putative F-box protein At3g58950 (Arabidopsis thaliana (Mouse-ear cress)).